A 203-amino-acid chain; its full sequence is RNA annealing protein YRA2 (203 aa).

N-acetylmethionine is present on Met1. Disordered stretches follow at residues 1-60 (MDKA…REEP) and 137-203 (QPQR…YMKG). Over residues 11-20 (NSHTDSSSNH) the composition is skewed to polar residues. The span at 47 to 60 (SRSKDRLYREREEP) shows a compositional bias: basic and acidic residues. One can recognise an RRM domain in the interval 64 to 138 (KRIRISKIPL…AKIEVEIYQP (75 aa)). Basic residues-rich tracts occupy residues 139–153 (QRKH…RRKQ) and 161–180 (GRPG…KNKG).

It belongs to the YRA1 family. Associates with mRNPs. Interacts with YRA1.

It localises to the nucleus. Its function is as follows. Involved in export of poly(A) mRNAs from the nucleus. Recruited to the coding sequences as well as poly-A sites of active genes. The polypeptide is RNA annealing protein YRA2 (YRA2) (Saccharomyces cerevisiae (strain JAY291) (Baker's yeast)).